The chain runs to 1528 residues: MRVRGALQAAALLASALWAAPLLAKDHPTFKTTKLDTQPNNLNYFEGSDTILFHDTHKSNLWRSDDAGATWSVVKDIPDGKVARLYMHDFDSKRAFAITDGRKHYRTTDQGKTWKTFEVDAAWDTERFDILHFHATDPDRIIFNGLHCLGFLCEEVSLYTIDDFETPAKPLRPDTLGCWWAKSSPVFTTGDSDLDKDRILCIIMGVDSIFSEDRRLVISDDFFKADKEGNIQEFEPNLAGDKPVRGVVNVAAVKRYFMVATTSANTDEMALFISTDTKKWQRAMFPNAHDDHDHKIVQEAYTVLESTNYSIQLNVMTGSKSAPMGIMFTSNYDGTYFSENLEYTNLNMFGHVDFEKIAGIQGIFLVNKVDNGKEVDEKPSTKKKLVSEITFDDGRTFDKVTADGKRIHLHSVTELNNVGRVFSSPAPGLVMANGNTGDYLGDYWEDANLYVSDDAGKTWKKALKGPHKYEFGDQGSILVAVRDSKEEDISEISYSLDHGENWVDEKLPDDLKIQPWILTTTPDSTGLQFVLIGKAKGAWHVIHIDFEGLHEATCKESDMEEWHARVDKDGEPTCIMGHTQTYPRRKKDAKCFLKKEFKLAEVETKDCDCTDQDYECDYNFERNDKGICVSRGPIPIPEGACKEGDRNGKFLGTSGYRKIPGNTCKDTKETKDKYKDVERSCGDGIGAPPDEATGELQQVDTKGKFGHWTHWEKHYLERGESSSDSSETIIMRGMNRTVDDSGPKVGPIWRTTDHGKKWDKVDFFKDDEVISIVPHPTVKDWVFFLTEGKKLIYTPDRGKRFRTFEVPQPADFEAAANGIFPLIFHPDKPNWLIWLGKKCESKNDCYRVAYGTKDGERWETLARDVYRCEFTGAEAYGRKYANRALEQILCLKHEKEGDNDSALQLVSSNDWFNQDERVRLKEAKEFATMAEFIVVATEDTEKKTLRAYASLDGSLYSEAKFPFGFEVPHQHAYTVLDSSTHAVNLFVATRMEGDKSLGTILKSNSNGTSYVVSVKNVNCDQYFYVDFEKMVGLEGVALVNVVVNPDAKSSAPKKLQTKITHNDGAQWAYLPTPRKDEFGKFPCSSSGTEKCALHIQGYTQRRDRGKTYSSEGAVGVMFGWGNVGDSLGSIKDADTFMTTDAGITWKRVKKGRWNWALGDQGSIIVLVPIRGQKTDTLEYSLDQGATWKKHTFSKEKVDIWDLTTTRSGNSQNFLIWGENSDGLFTTKIDFTKFTDHVCKYDPENLSKSDYQIFSPKHPLQPDGCLFGHVSQYLRKKPGLKCFNDFRLDPLYSKQNCTCTRSDFECDFNYELDKHGQCSLVSGLKPKDHKLWCKEHPDEIEYYEPTGFRRIPLTTCQGGLDFEKAAAVHPCPGHEDDFERKHRVSGIAIFFAVVLPVAAASAIGWWVYRHWDGKFGQIRLGEQGASTMEFFDADRPWVKYPVIALSAVVALAGAMPLVLGALWRTAKSTAERWGIGGGGGGRGGWSRLDGGGASRTFRTRDSFARGRGDYTIVDEDEGELLGEESDEEV.

The N-terminal stretch at 1–24 (MRVRGALQAAALLASALWAAPLLA) is a signal peptide. The Lumenal segment spans residues 25 to 1385 (KDHPTFKTTK…DFERKHRVSG (1361 aa)). BNR repeat units follow at residues 62-72 (WRSDDAGATWS) and 105-115 (YRTTDQGKTWK). An N-linked (GlcNAc...) asparagine glycan is attached at Asn-308. BNR repeat units follow at residues 450-461 (YVSDDAGKTWKK) and 494-502 (YSLDHGENW). Residue Asn-735 is glycosylated (N-linked (GlcNAc...) asparagine). A BNR 5 repeat occupies 749-759 (WRTTDHGKKWD). N-linked (GlcNAc...) asparagine glycans are attached at residues Asn-899 and Asn-1006. BNR repeat units follow at residues 1136–1146 (FMTTDAGITWK) and 1179–1189 (YSLDQGATWKK). N-linked (GlcNAc...) asparagine glycans are attached at residues Asn-1244 and Asn-1295. Residues 1386–1406 (IAIFFAVVLPVAAASAIGWWV) traverse the membrane as a helical segment. The Cytoplasmic segment spans residues 1407-1440 (YRHWDGKFGQIRLGEQGASTMEFFDADRPWVKYP). The chain crosses the membrane as a helical span at residues 1441-1461 (VIALSAVVALAGAMPLVLGAL). The Lumenal segment spans residues 1462–1528 (WRTAKSTAER…LLGEESDEEV (67 aa)).

The protein belongs to the VPS10-related sortilin family.

The protein localises to the golgi apparatus. Its subcellular location is the trans-Golgi network membrane. It localises to the prevacuolar compartment membrane. Functions as a sorting receptor in the Golgi compartment required for the intracellular sorting and delivery of soluble vacuolar proteins, like carboxypeptidase Y (CPY) and proteinase A. Executes multiple rounds of sorting by cycling between the late Golgi and a prevacuolar endosome-like compartment. The protein is Vacuolar protein sorting/targeting protein 10 (vps10) of Neurospora crassa (strain ATCC 24698 / 74-OR23-1A / CBS 708.71 / DSM 1257 / FGSC 987).